Consider the following 435-residue polypeptide: Eukaryotic translation initiation factor 3 subunit E (435 aa).

The 174-residue stretch at 219–392 folds into the PCI domain; it reads FFNHPKGRDL…GHVVMGTQPL (174 aa).

This sequence belongs to the eIF-3 subunit E family. Component of the eukaryotic translation initiation factor 3 (eIF-3) complex. The eIF-3 complex interacts with pix. Interacts with mxt. As to expression, expression levels in females and males are relatively similar 10 days after oviposition, however by day 15 expression is higher in gravid females than in males (at protein level).

It localises to the cytoplasm. The protein resides in the microsome. It is found in the endoplasmic reticulum. Component of the eukaryotic translation initiation factor 3 (eIF-3) complex, which is involved in protein synthesis of a specialized repertoire of mRNAs and, together with other initiation factors, stimulates binding of mRNA and methionyl-tRNAi to the 40S ribosome. The eIF-3 complex specifically targets and initiates translation of a subset of mRNAs involved in cell proliferation. In addition to its role in the eIF-3 complex, also functions in protein ubiquitination and degradation. During mitosis required for regulating mitotic microtubule growth and kinetochore formation, and consequently is required for satisfying the spindle assembly checkpoint (SAC) during metaphase to prevent delays in mitotic progression. This is likely by promoting the ubiquitination and degradation of Klp67A, a kinesin-like protein that suppresses microtubule polymerization at plus ends. Acts in the COP9 signalosome (CSN) mediated regulation of cullin neddylation by promoting Cul1 and Cul3 neddylation and negatively regulating the CSN complex subunit CSN5. This is Eukaryotic translation initiation factor 3 subunit E from Drosophila melanogaster (Fruit fly).